The primary structure comprises 564 residues: NAD-dependent malic enzyme (564 aa).

Tyr-104 serves as the catalytic Proton donor. Arg-157 is an NAD(+) binding site. Residue Lys-175 is the Proton acceptor of the active site. Residues Glu-246, Asp-247, and Asp-270 each contribute to the a divalent metal cation site. NAD(+) is bound by residues Asp-270 and Asn-417.

It belongs to the malic enzymes family. In terms of assembly, homotetramer. The cofactor is Mg(2+). Mn(2+) is required as a cofactor.

It carries out the reaction (S)-malate + NAD(+) = pyruvate + CO2 + NADH. The catalysed reaction is oxaloacetate + H(+) = pyruvate + CO2. The sequence is that of NAD-dependent malic enzyme from Aeromonas hydrophila subsp. hydrophila (strain ATCC 7966 / DSM 30187 / BCRC 13018 / CCUG 14551 / JCM 1027 / KCTC 2358 / NCIMB 9240 / NCTC 8049).